The primary structure comprises 123 residues: Ribonuclease P protein component 1 (123 aa).

Residues 73 to 93 (PDNGVGTAFKPAGGETRQTTG) form a disordered region.

This sequence belongs to the eukaryotic/archaeal RNase P protein component 1 family. As to quaternary structure, consists of a catalytic RNA component and at least 4-5 protein subunits.

The protein resides in the cytoplasm. It carries out the reaction Endonucleolytic cleavage of RNA, removing 5'-extranucleotides from tRNA precursor.. Functionally, part of ribonuclease P, a protein complex that generates mature tRNA molecules by cleaving their 5'-ends. The chain is Ribonuclease P protein component 1 from Halobacterium salinarum (strain ATCC 29341 / DSM 671 / R1).